A 385-amino-acid chain; its full sequence is Outer membrane protein assembly factor BamB (385 aa).

Residues 1–20 form the signal peptide; it reads MRKVLKKAALCTFGFSMLFG. Cys-21 carries the N-palmitoyl cysteine lipid modification. Residue Cys-21 is the site of S-diacylglycerol cysteine attachment.

Belongs to the BamB family. As to quaternary structure, part of the Bam complex.

The protein resides in the cell outer membrane. In terms of biological role, part of the outer membrane protein assembly complex, which is involved in assembly and insertion of beta-barrel proteins into the outer membrane. The chain is Outer membrane protein assembly factor BamB from Aliivibrio fischeri (strain ATCC 700601 / ES114) (Vibrio fischeri).